Here is a 79-residue protein sequence, read N- to C-terminus: CATR tumorigenic conversion 1 protein (79 aa).

This Homo sapiens (Human) protein is CATR tumorigenic conversion 1 protein (CATR1).